Reading from the N-terminus, the 468-residue chain is UDP-N-acetylmuramate--L-alanine ligase (468 aa).

G114 to T120 serves as a coordination point for ATP.

This sequence belongs to the MurCDEF family.

It is found in the cytoplasm. The catalysed reaction is UDP-N-acetyl-alpha-D-muramate + L-alanine + ATP = UDP-N-acetyl-alpha-D-muramoyl-L-alanine + ADP + phosphate + H(+). It functions in the pathway cell wall biogenesis; peptidoglycan biosynthesis. Its function is as follows. Cell wall formation. The protein is UDP-N-acetylmuramate--L-alanine ligase of Rhodopseudomonas palustris (strain HaA2).